Reading from the N-terminus, the 193-residue chain is Xanthine phosphoribosyltransferase (193 aa).

Leucine 20 and threonine 27 together coordinate xanthine. 128-132 (ANGQA) serves as a coordination point for 5-phospho-alpha-D-ribose 1-diphosphate. Lysine 156 contributes to the xanthine binding site.

It belongs to the purine/pyrimidine phosphoribosyltransferase family. Xpt subfamily. In terms of assembly, homodimer.

The protein resides in the cytoplasm. The enzyme catalyses XMP + diphosphate = xanthine + 5-phospho-alpha-D-ribose 1-diphosphate. The protein operates within purine metabolism; XMP biosynthesis via salvage pathway; XMP from xanthine: step 1/1. Its function is as follows. Converts the preformed base xanthine, a product of nucleic acid breakdown, to xanthosine 5'-monophosphate (XMP), so it can be reused for RNA or DNA synthesis. The protein is Xanthine phosphoribosyltransferase of Streptococcus agalactiae serotype Ia (strain ATCC 27591 / A909 / CDC SS700).